A 156-amino-acid polypeptide reads, in one-letter code: MDKHPFPYNIRHKLSFFRDTFDIIIQNAHTLTVSWEISEETMRLAEAVLFEKTQDMIKELRIVIKRKDIEAVRTKRTTYDKGEWTIRQAAGDAVYRAEYRIVNSMNVSLKLAGTDDIYLDENGIRHINSFQIEEAHTRWEAQFSAYTCYGRGEKER.

This is an uncharacterized protein from Bacillus subtilis (strain 168).